Consider the following 229-residue polypeptide: Sec-independent protein translocase protein TatB (229 aa).

A helical membrane pass occupies residues 1–21; the sequence is MFDIGFSELLLFGVIALIVLG. Positions 90-131 are disordered; that stretch reads EFEHSQSQNLKTSDKAASPANQANNDSAIQNNNEPATFSYAY. Residues 108-131 are compositionally biased toward polar residues; it reads PANQANNDSAIQNNNEPATFSYAY.

Belongs to the TatB family. In terms of assembly, the Tat system comprises two distinct complexes: a TatABC complex, containing multiple copies of TatA, TatB and TatC subunits, and a separate TatA complex, containing only TatA subunits. Substrates initially bind to the TatABC complex, which probably triggers association of the separate TatA complex to form the active translocon.

Its subcellular location is the cell inner membrane. Its function is as follows. Part of the twin-arginine translocation (Tat) system that transports large folded proteins containing a characteristic twin-arginine motif in their signal peptide across membranes. Together with TatC, TatB is part of a receptor directly interacting with Tat signal peptides. TatB may form an oligomeric binding site that transiently accommodates folded Tat precursor proteins before their translocation. The sequence is that of Sec-independent protein translocase protein TatB from Psychrobacter arcticus (strain DSM 17307 / VKM B-2377 / 273-4).